The sequence spans 407 residues: MNSHFLTNDLILEVLSRLPLKSVARFHCVSKRWASMFGSPYFKELFLTRSSAKPRLLFAIVQNGVWRFFSSPRLEKSSSTLVATAEFHMKLSPNNLRIYHDNTPRYFSIGYASGLIYLYGDRYEATPLICNPNTGRYTILPKCYTYRKAFSFFGFDPIDKQYKALSMIYPSGPGHSKILTFGDGDMNWKKIKYRVLHDIYSQGICINGVLYYLGDTSDWDNDHDVTSGNVLVCFDLRSESFTFIGLECGQLINYKGKLAVIFWDDVDDDDVKDDAIDEMHVWVLEDVEKKEWSKYAYTWTEDKLYRSQVSVVGMTASGEIVFSMRKYTSEQPFYVYYFNPERNNLRRVEIQGFEAFTKFGTVYTFVDHVEDLNVYNLKHFKSVHPPSVQPEYDESDSESEEDREIII.

The F-box domain maps to 1–45; the sequence is MNSHFLTNDLILEVLSRLPLKSVARFHCVSKRWASMFGSPYFKEL. The segment at 385–407 is disordered; the sequence is PPSVQPEYDESDSESEEDREIII. A compositionally biased stretch (acidic residues) spans 391-407; sequence EYDESDSESEEDREIII.

This is Putative F-box protein At2g16220 from Arabidopsis thaliana (Mouse-ear cress).